The following is a 308-amino-acid chain: Cytochrome b (308 aa).

The next 4 helical transmembrane spans lie at phenylalanine 1–methionine 21, tryptophan 45–isoleucine 66, tryptophan 81–leucine 101, and phenylalanine 146–threonine 166. Heme b is bound by residues histidine 51 and histidine 65. Heme b is bound by residues histidine 150 and histidine 164. Histidine 169 lines the a ubiquinone pocket. Helical transmembrane passes span threonine 194–serine 214, leucine 256–histidine 276, and leucine 288–serine 308.

This sequence belongs to the cytochrome b family. In terms of assembly, the cytochrome bc1 complex contains 11 subunits: 3 respiratory subunits (MT-CYB, CYC1 and UQCRFS1), 2 core proteins (UQCRC1 and UQCRC2) and 6 low-molecular weight proteins (UQCRH/QCR6, UQCRB/QCR7, UQCRQ/QCR8, UQCR10/QCR9, UQCR11/QCR10 and a cleavage product of UQCRFS1). This cytochrome bc1 complex then forms a dimer. Heme b serves as cofactor.

The protein localises to the mitochondrion inner membrane. Component of the ubiquinol-cytochrome c reductase complex (complex III or cytochrome b-c1 complex) that is part of the mitochondrial respiratory chain. The b-c1 complex mediates electron transfer from ubiquinol to cytochrome c. Contributes to the generation of a proton gradient across the mitochondrial membrane that is then used for ATP synthesis. The protein is Cytochrome b (MT-CYB) of Zaratornis stresemanni (White-cheeked cotinga).